Reading from the N-terminus, the 509-residue chain is 2,3-bisphosphoglycerate-independent phosphoglycerate mutase (509 aa).

Mn(2+)-binding residues include D14 and S64. S64 acts as the Phosphoserine intermediate in catalysis. Residues H125, 155-156, R187, R193, 259-262, and K332 contribute to the substrate site; these read RD and RADR. Mn(2+) contacts are provided by D399, H403, D440, H441, and H459.

Belongs to the BPG-independent phosphoglycerate mutase family. In terms of assembly, monomer. Requires Mn(2+) as cofactor.

It carries out the reaction (2R)-2-phosphoglycerate = (2R)-3-phosphoglycerate. It participates in carbohydrate degradation; glycolysis; pyruvate from D-glyceraldehyde 3-phosphate: step 3/5. Catalyzes the interconversion of 2-phosphoglycerate and 3-phosphoglycerate. This is 2,3-bisphosphoglycerate-independent phosphoglycerate mutase from Psychromonas ingrahamii (strain DSM 17664 / CCUG 51855 / 37).